The chain runs to 108 residues: U3-lycotoxin-Ls1w (108 aa).

The N-terminal stretch at 1–20 (MKFVLLFGVLLVTLFSYSSA) is a signal peptide. A propeptide spanning residues 21 to 44 (EMLDDFDQADEDELLSLIEKEEAR) is cleaved from the precursor. Disulfide bonds link Cys-48–Cys-63, Cys-55–Cys-72, Cys-62–Cys-87, and Cys-74–Cys-85.

Belongs to the neurotoxin 19 (CSTX) family. 01 subfamily. Expressed by the venom gland.

It is found in the secreted. This Lycosa singoriensis (Wolf spider) protein is U3-lycotoxin-Ls1w.